We begin with the raw amino-acid sequence, 61 residues long: uncharacterized protein (61 aa).

Positions 10-61 (YEEENDNEDFEEEVELSREDLNQIINELAPFLIKLLTDLTELTQKKEESENE) form a coiled coil.

This is an uncharacterized protein from Acidianus bottle-shaped virus (isolate Italy/Pozzuoli) (ABV).